A 436-amino-acid chain; its full sequence is Protein PhoH2 (436 aa).

A PINc domain is found at Arg12 to Leu137.

The protein in the N-terminal section; belongs to the PINc/VapC protein family. This sequence in the C-terminal section; belongs to the PhoH family.

The catalysed reaction is n ATP + n H2O + wound RNA = n ADP + n phosphate + unwound RNA.. It carries out the reaction ATP + H2O = ADP + phosphate + H(+). The enzyme catalyses GTP + H2O = GDP + phosphate + H(+). In terms of biological role, unwinds and/or cleaves 5'-tailed RNA in vitro, the reaction is maximal with hydrolyzable ATP; double-stranded (ds)RNA and dsDNA are not unwound. Unlike the protein in mycobacteria there does not seem to be an antitoxin gene upstream, suggesting this is not a toxin-antitoxin system. Has ATPase and GTPase activities. The sequence is that of Protein PhoH2 from Thermobispora bispora (strain ATCC 19993 / DSM 43833 / CBS 139.67 / JCM 10125 / KCTC 9307 / NBRC 14880 / R51).